We begin with the raw amino-acid sequence, 471 residues long: Tryptophanase (471 aa).

N6-acetyllysine occurs at positions 5, 115, and 156. N6-(pyridoxal phosphate)lysine is present on Lys-270. Lys-450 is modified (N6-acetyllysine).

This sequence belongs to the beta-eliminating lyase family. As to quaternary structure, homotetramer. It depends on pyridoxal 5'-phosphate as a cofactor.

It carries out the reaction L-tryptophan + H2O = indole + pyruvate + NH4(+). Its pathway is amino-acid degradation; L-tryptophan degradation via pyruvate pathway; indole and pyruvate from L-tryptophan: step 1/1. This is Tryptophanase from Shigella boydii serotype 18 (strain CDC 3083-94 / BS512).